Consider the following 312-residue polypeptide: MEFNHVPVLLEETIENLNIKEDGIYVDCTLGGAGHSSEILKRLSSKGRLIGIDQDKDALKAASERLKEYKNLTFVHDNFSNIKNILEELKIDKVDGILADLGVSSYQLDEPERGFSYMNDAPLDMRMNRDSEFSAYDVINGYDEEKLYSIIKNYGEEKFAKRIAKFIVEKRSEEAINTTFELVDIIKAAIPAKFRRQGPHPAKRTFQAIRIEVNQELEILNKTIEDSVDKLKSEGRICIITFHSLEDRIVKNKYRELQDPCMCPKDIPMCVCGKKPKIKIITRKPIEASSYELEYNPRSRSAKLRVAEKINL.

S-adenosyl-L-methionine-binding positions include 33 to 35 (AGH), D53, F79, D100, and Q107.

This sequence belongs to the methyltransferase superfamily. RsmH family.

The protein localises to the cytoplasm. The enzyme catalyses cytidine(1402) in 16S rRNA + S-adenosyl-L-methionine = N(4)-methylcytidine(1402) in 16S rRNA + S-adenosyl-L-homocysteine + H(+). Its function is as follows. Specifically methylates the N4 position of cytidine in position 1402 (C1402) of 16S rRNA. The sequence is that of Ribosomal RNA small subunit methyltransferase H from Clostridium acetobutylicum (strain ATCC 824 / DSM 792 / JCM 1419 / IAM 19013 / LMG 5710 / NBRC 13948 / NRRL B-527 / VKM B-1787 / 2291 / W).